Reading from the N-terminus, the 346-residue chain is Protein tas (346 aa).

Tyrosine 53 functions as the Proton donor in the catalytic mechanism. Serine 234 to lysine 244 contacts NADP(+).

This sequence belongs to the aldo/keto reductase family. Aldo/keto reductase 2 subfamily.

The polypeptide is Protein tas (tas) (Escherichia coli (strain K12)).